Here is a 437-residue protein sequence, read N- to C-terminus: Proton/glutamate-aspartate symporter (437 aa).

The Cytoplasmic portion of the chain corresponds to 1 to 5 (MKNIK). Residues 6–26 (FSLAWQILFAMVLGILLGSYL) form a helical membrane-spanning segment. Topologically, residues 27-50 (HYHSDSRDWLVVNLLSPAGDIFIH) are periplasmic. Residues 51 to 71 (LIKMIVVPIVISTLVVGIAGV) traverse the membrane as a helical segment. At 72-84 (GDAKQLGRIGAKT) the chain is on the cytoplasmic side. Residues 85–105 (IIYFEVITTVAIILGITLANV) traverse the membrane as a helical segment. The Periplasmic segment spans residues 106–159 (FQPGAGVDMSQLATVDISKYQSTTEAVQSSSHGIMGTILSLVPTNIVASMAKGE). A helical transmembrane segment spans residues 160–180 (MLPIIFFSVLFGLGLSSLPAT). The Cytoplasmic portion of the chain corresponds to 181–210 (HREPLVTVFRSISETMFKVTHMVMRYAPVG). Residues 211–231 (VFALIAVTVANFGFSSLWPLA) form a helical membrane-spanning segment. Lys232 is a topological domain (periplasmic). Residues 233 to 253 (LVLLVHFAILFFALVVLGIVA) form a helical membrane-spanning segment. Over 254-292 (RLCGLSVWILIRILKDELILAYSTASSESVLPRIIEKME) the chain is Cytoplasmic. The chain crosses the membrane as a helical span at residues 293 to 313 (AYGAPVSITSFVVPTGYSFNL). Topologically, residues 314-324 (DGSTLYQSIAA) are periplasmic. A helical membrane pass occupies residues 325–345 (IFIAQLYGIDLSIWQEIILVL). Topologically, residues 346 to 361 (TLMVTSKGIAGVPGVS) are cytoplasmic. Residues 362-382 (FVVLLATLGSVGIPLEGLAFI) form a helical membrane-spanning segment. The Periplasmic segment spans residues 383-387 (AGVDR). The helical transmembrane segment at 388 to 408 (ILDMARTALNVVGNALAVLVI) threads the bilayer. The Cytoplasmic segment spans residues 409–437 (AKWEHKFDRKKALAYEREVLGKFDKTADQ).

Belongs to the dicarboxylate/amino acid:cation symporter (DAACS) (TC 2.A.23) family. GltP subfamily.

Its subcellular location is the cell inner membrane. Its activity is regulated as follows. Glutamate uptake is inhibited by L-cysteate and beta-hydroxyaspartate. Inhibited by the uncoupler carbonylcyanide m-chlorophenylhydrazone (CCCP). Functionally, catalyzes the proton-dependent, binding-protein-independent transport of glutamate and aspartate. This is Proton/glutamate-aspartate symporter from Escherichia coli (strain K12).